We begin with the raw amino-acid sequence, 259 residues long: Dihydroorotate dehydrogenase B (NAD(+)), electron transfer subunit (259 aa).

One can recognise an FAD-binding FR-type domain in the interval 2–102 (MQKQNMIVVN…LGPLGHGFPV (101 aa)). Residues 53-56 (RPIS), 70-72 (LYR), and 77-78 (GT) contribute to the FAD site. Residues Cys-221, Cys-226, Cys-229, and Cys-246 each contribute to the [2Fe-2S] cluster site.

Belongs to the PyrK family. Heterotetramer of 2 PyrK and 2 PyrD type B subunits. The cofactor is [2Fe-2S] cluster. It depends on FAD as a cofactor.

The protein operates within pyrimidine metabolism; UMP biosynthesis via de novo pathway; orotate from (S)-dihydroorotate (NAD(+) route): step 1/1. Functionally, responsible for channeling the electrons from the oxidation of dihydroorotate from the FMN redox center in the PyrD type B subunit to the ultimate electron acceptor NAD(+). The sequence is that of Dihydroorotate dehydrogenase B (NAD(+)), electron transfer subunit from Bacillus mycoides (strain KBAB4) (Bacillus weihenstephanensis).